A 102-amino-acid polypeptide reads, in one-letter code: Small ribosomal subunit protein uS10 (102 aa).

Belongs to the universal ribosomal protein uS10 family. Part of the 30S ribosomal subunit.

Involved in the binding of tRNA to the ribosomes. The polypeptide is Small ribosomal subunit protein uS10 (Methanococcus maripaludis (strain C5 / ATCC BAA-1333)).